The primary structure comprises 277 residues: Putative phosphoenolpyruvate synthase regulatory protein (277 aa).

152 to 159 (GVSRCGKT) contributes to the ADP binding site.

Belongs to the pyruvate, phosphate/water dikinase regulatory protein family. PSRP subfamily.

The catalysed reaction is [pyruvate, water dikinase] + ADP = [pyruvate, water dikinase]-phosphate + AMP + H(+). The enzyme catalyses [pyruvate, water dikinase]-phosphate + phosphate + H(+) = [pyruvate, water dikinase] + diphosphate. Functionally, bifunctional serine/threonine kinase and phosphorylase involved in the regulation of the phosphoenolpyruvate synthase (PEPS) by catalyzing its phosphorylation/dephosphorylation. This chain is Putative phosphoenolpyruvate synthase regulatory protein, found in Chromohalobacter salexigens (strain ATCC BAA-138 / DSM 3043 / CIP 106854 / NCIMB 13768 / 1H11).